Consider the following 231-residue polypeptide: Phosphoglycolate phosphatase (231 aa).

D9 acts as the Nucleophile in catalysis. Residues D9 and D11 each coordinate Mg(2+). A substrate-binding site is contributed by K154. Mg(2+)-binding residues include D177 and D181.

This sequence belongs to the archaeal SPP-like hydrolase family. The cofactor is Mg(2+).

The enzyme catalyses 2-phosphoglycolate + H2O = glycolate + phosphate. Functionally, catalyzes the dephosphorylation of 2-phosphoglycolate. The protein is Phosphoglycolate phosphatase of Nitrosopumilus maritimus (strain SCM1).